Here is a 494-residue protein sequence, read N- to C-terminus: WD repeat-containing protein 37 (494 aa).

Residues 1 to 38 (MPTESGSWAAARQTKQKRKSHSLSIKRTNSSEQDRPGL) are disordered. The segment covering 22–31 (SLSIKRTNSS) has biased composition (polar residues). WD repeat units lie at residues 154–194 (GHRD…CLIK) and 197–236 (GHAG…PTPQ). The disordered stretch occupies residues 236–266 (QPTADTSISGEEEVDFSDKDENDGDGDASSD). The segment covering 245–263 (GEEEVDFSDKDENDGDGDA) has biased composition (acidic residues). WD repeat units lie at residues 279–318 (SHQG…LVHS), 321–360 (GHDQ…IHSV), 365–403 (GHTD…SPIA), 406–445 (RTDS…LARL), and 452–493 (GHRR…LLQE).

The protein localises to the cytoplasm. It is found in the nucleus. In Xenopus tropicalis (Western clawed frog), this protein is WD repeat-containing protein 37 (wdr37).